Reading from the N-terminus, the 537-residue chain is Endoprotease aex-5 (537 aa).

Positions 1 to 17 are cleaved as a signal peptide; that stretch reads MKLIFLLLLFGVSPIVC. The propeptide occupies 18–99; sequence QDFEDGVFLA…KLQGFRRYKR (82 aa). The Peptidase S8 domain occupies 111-413; sequence VWNLTPSLYI…FGLLNAQKLV (303 aa). Asn129 carries an N-linked (GlcNAc...) asparagine glycan. Residues Asp139 and His178 each act as charge relay system in the active site. A disulfide bridge connects residues Cys286 and Cys316. The active-site Charge relay system is Ser346. An N-linked (GlcNAc...) asparagine glycan is attached at Asn380. In terms of domain architecture, P/Homo B spans 407 to 537; that stretch reads LNAQKLVVMA…KMFKVVGTMS (131 aa).

The protein belongs to the peptidase S8 family. Furin subfamily.

Its subcellular location is the secreted. Probable serine endoprotease which cleaves preproteins at paired basic amino acids. May process FMRFamide-like (flp) and neuropeptide-like protein (nlp) neuropeptides. In muscles, involved in neuronal retrograde signaling by regulating presynaptic activity and localization of synaptic vesicle fusion protein unc-13 at the neuromuscular junction (NMJ). Acts in the intestine to regulate anterior body muscle contractions (aBOC) and the expulsion steps during the defecation motor program (DMP). Probably by regulating DMP, required for fatty acid uptake by intestinal cells and therefore regulates the levels of triglycerides in the intestine. Plays a role in locomotion. The sequence is that of Endoprotease aex-5 from Caenorhabditis elegans.